The primary structure comprises 135 residues: DNA-directed RNA polymerase subunit omega (135 aa).

The disordered stretch occupies residues 107–135; that stretch reads ASQESQDYEVDGEIDDEINDQDGDEEVSV. Residues 112–135 are compositionally biased toward acidic residues; that stretch reads QDYEVDGEIDDEINDQDGDEEVSV.

Belongs to the RNA polymerase subunit omega family. As to quaternary structure, the RNAP catalytic core consists of 2 alpha, 1 beta, 1 beta' and 1 omega subunit. When a sigma factor is associated with the core the holoenzyme is formed, which can initiate transcription.

It carries out the reaction RNA(n) + a ribonucleoside 5'-triphosphate = RNA(n+1) + diphosphate. In terms of biological role, promotes RNA polymerase assembly. Latches the N- and C-terminal regions of the beta' subunit thereby facilitating its interaction with the beta and alpha subunits. This is DNA-directed RNA polymerase subunit omega from Wolbachia pipientis wMel.